Consider the following 270-residue polypeptide: Putative phosphoenolpyruvate synthase regulatory protein (270 aa).

G150–T157 contacts ADP.

This sequence belongs to the pyruvate, phosphate/water dikinase regulatory protein family. PSRP subfamily.

It catalyses the reaction [pyruvate, water dikinase] + ADP = [pyruvate, water dikinase]-phosphate + AMP + H(+). The catalysed reaction is [pyruvate, water dikinase]-phosphate + phosphate + H(+) = [pyruvate, water dikinase] + diphosphate. Functionally, bifunctional serine/threonine kinase and phosphorylase involved in the regulation of the phosphoenolpyruvate synthase (PEPS) by catalyzing its phosphorylation/dephosphorylation. This chain is Putative phosphoenolpyruvate synthase regulatory protein, found in Shewanella amazonensis (strain ATCC BAA-1098 / SB2B).